Consider the following 225-residue polypeptide: Holliday junction branch migration complex subunit RuvA (225 aa).

Residues 1–71 (MISWINGDLV…EDSDLLFGFT (71 aa)) form a domain I region. Residues 72–150 (SNEQKNFFIE…SEILSEEEKS (79 aa)) form a domain II region. The segment at 151–161 (KGELEIKDPEI) is flexible linker. Residues 161-225 (INKMIEDLQL…LDEDSSNIAR (65 aa)) are domain III.

This sequence belongs to the RuvA family. Homotetramer. Forms an RuvA(8)-RuvB(12)-Holliday junction (HJ) complex. HJ DNA is sandwiched between 2 RuvA tetramers; dsDNA enters through RuvA and exits via RuvB. An RuvB hexamer assembles on each DNA strand where it exits the tetramer. Each RuvB hexamer is contacted by two RuvA subunits (via domain III) on 2 adjacent RuvB subunits; this complex drives branch migration. In the full resolvosome a probable DNA-RuvA(4)-RuvB(12)-RuvC(2) complex forms which resolves the HJ.

It localises to the cytoplasm. Its function is as follows. The RuvA-RuvB-RuvC complex processes Holliday junction (HJ) DNA during genetic recombination and DNA repair, while the RuvA-RuvB complex plays an important role in the rescue of blocked DNA replication forks via replication fork reversal (RFR). RuvA specifically binds to HJ cruciform DNA, conferring on it an open structure. The RuvB hexamer acts as an ATP-dependent pump, pulling dsDNA into and through the RuvAB complex. HJ branch migration allows RuvC to scan DNA until it finds its consensus sequence, where it cleaves and resolves the cruciform DNA. The protein is Holliday junction branch migration complex subunit RuvA of Prochlorococcus marinus (strain MIT 9301).